Here is a 254-residue protein sequence, read N- to C-terminus: 4-hydroxy-tetrahydrodipicolinate reductase (254 aa).

7 to 12 is an NAD(+) binding site; the sequence is GASGRI. Position 35 (R35) interacts with NADP(+). Residues 91-93 and 115-118 each bind NAD(+); these read GTT and AHNM. H147 (proton donor/acceptor) is an active-site residue. Residue H148 participates in (S)-2,3,4,5-tetrahydrodipicolinate binding. Catalysis depends on K151, which acts as the Proton donor. 157 to 158 provides a ligand contact to (S)-2,3,4,5-tetrahydrodipicolinate; that stretch reads GT.

Belongs to the DapB family.

It is found in the cytoplasm. It catalyses the reaction (S)-2,3,4,5-tetrahydrodipicolinate + NAD(+) + H2O = (2S,4S)-4-hydroxy-2,3,4,5-tetrahydrodipicolinate + NADH + H(+). The enzyme catalyses (S)-2,3,4,5-tetrahydrodipicolinate + NADP(+) + H2O = (2S,4S)-4-hydroxy-2,3,4,5-tetrahydrodipicolinate + NADPH + H(+). Its pathway is amino-acid biosynthesis; L-lysine biosynthesis via DAP pathway; (S)-tetrahydrodipicolinate from L-aspartate: step 4/4. Catalyzes the conversion of 4-hydroxy-tetrahydrodipicolinate (HTPA) to tetrahydrodipicolinate. This is 4-hydroxy-tetrahydrodipicolinate reductase from Helicobacter pylori (strain HPAG1).